The chain runs to 578 residues: Proline--tRNA ligase (578 aa).

Belongs to the class-II aminoacyl-tRNA synthetase family. ProS type 1 subfamily. Homodimer.

Its subcellular location is the cytoplasm. It carries out the reaction tRNA(Pro) + L-proline + ATP = L-prolyl-tRNA(Pro) + AMP + diphosphate. Its function is as follows. Catalyzes the attachment of proline to tRNA(Pro) in a two-step reaction: proline is first activated by ATP to form Pro-AMP and then transferred to the acceptor end of tRNA(Pro). As ProRS can inadvertently accommodate and process non-cognate amino acids such as alanine and cysteine, to avoid such errors it has two additional distinct editing activities against alanine. One activity is designated as 'pretransfer' editing and involves the tRNA(Pro)-independent hydrolysis of activated Ala-AMP. The other activity is designated 'posttransfer' editing and involves deacylation of mischarged Ala-tRNA(Pro). The misacylated Cys-tRNA(Pro) is not edited by ProRS. This chain is Proline--tRNA ligase, found in Burkholderia multivorans (strain ATCC 17616 / 249).